We begin with the raw amino-acid sequence, 241 residues long: MDGWQRAFVLHGRPYSETSLMLDLFTEGEGRMRVLAKGARGRRSNLKGCLQPFTPLLVRWSGRGEVKTLRSAEPVSLALPLSGSMLYSGLYVNELLSRVLEHQTSYSALFFDYLHCLQALAGSDGSPEHALRQFELAMLANLGYGVDFLHCAGSGQPVSDTMTYRYREEKGFIASLVVDHYSFTGRQLLALANREFPDADTLRAAKRFTRIALKPYLGGKPLKSRELFRQFVIKPPADPSP.

It belongs to the RecO family.

In terms of biological role, involved in DNA repair and RecF pathway recombination. The polypeptide is DNA repair protein RecO (Yersinia pseudotuberculosis serotype O:1b (strain IP 31758)).